The following is a 98-amino-acid chain: Cystatin-B (98 aa).

Residue methionine 1 is modified to N-acetylmethionine. A Secondary area of contact motif is present at residues 46–50; it reads QIVAG.

Belongs to the cystatin family. As to expression, widely expressed. Highest expression in heart, liver and kidney. Lower levels in brain, lung and skeletal muscle. Lowest levels in spleen and testis.

It is found in the cytoplasm. In terms of biological role, this is an intracellular thiol proteinase inhibitor. In Mus musculus (Mouse), this protein is Cystatin-B (Cstb).